The primary structure comprises 405 residues: Tryptophan synthase beta chain (405 aa).

K96 is subject to N6-(pyridoxal phosphate)lysine.

It belongs to the TrpB family. As to quaternary structure, tetramer of two alpha and two beta chains. Pyridoxal 5'-phosphate serves as cofactor.

It catalyses the reaction (1S,2R)-1-C-(indol-3-yl)glycerol 3-phosphate + L-serine = D-glyceraldehyde 3-phosphate + L-tryptophan + H2O. Its pathway is amino-acid biosynthesis; L-tryptophan biosynthesis; L-tryptophan from chorismate: step 5/5. The beta subunit is responsible for the synthesis of L-tryptophan from indole and L-serine. In Clostridium botulinum (strain Eklund 17B / Type B), this protein is Tryptophan synthase beta chain.